We begin with the raw amino-acid sequence, 535 residues long: Putative subtilisin-like proteinase 2 (535 aa).

The signal sequence occupies residues Met1–Gly17. In terms of domain architecture, Peptidase S8 spans Asn221–Ile475. Catalysis depends on charge relay system residues Asp255 and His277. Residues Cys369 and Cys400 are joined by a disulfide bond. Ser420 acts as the Charge relay system in catalysis. Residues Ile489–Gly509 form a helical membrane-spanning segment.

It belongs to the peptidase S8 family.

It localises to the membrane. May be involved in the degradation of proteins for nutrient acquisition or possess a regulatory function by proteolytic activation of proproteins. The protein is Putative subtilisin-like proteinase 2 (SPL2) of Encephalitozoon cuniculi (strain GB-M1) (Microsporidian parasite).